Here is a 305-residue protein sequence, read N- to C-terminus: UDP-3-O-acyl-N-acetylglucosamine deacetylase (305 aa).

Residues His-79, His-238, and Asp-242 each coordinate Zn(2+). His-265 serves as the catalytic Proton donor.

It belongs to the LpxC family. It depends on Zn(2+) as a cofactor.

The catalysed reaction is a UDP-3-O-[(3R)-3-hydroxyacyl]-N-acetyl-alpha-D-glucosamine + H2O = a UDP-3-O-[(3R)-3-hydroxyacyl]-alpha-D-glucosamine + acetate. Its pathway is glycolipid biosynthesis; lipid IV(A) biosynthesis; lipid IV(A) from (3R)-3-hydroxytetradecanoyl-[acyl-carrier-protein] and UDP-N-acetyl-alpha-D-glucosamine: step 2/6. In terms of biological role, catalyzes the hydrolysis of UDP-3-O-myristoyl-N-acetylglucosamine to form UDP-3-O-myristoylglucosamine and acetate, the committed step in lipid A biosynthesis. This is UDP-3-O-acyl-N-acetylglucosamine deacetylase from Citrobacter koseri (strain ATCC BAA-895 / CDC 4225-83 / SGSC4696).